Consider the following 59-residue polypeptide: MPGPCCNDKCVCQEGGCKAGCQCTSCRCSPCQKCTSGCKCATKEECSKTCTKPCSCCPK.

Residues 1–29 (MPGPCCNDKCVCQEGGCKAGCQCTSCRCS) form a beta region. Residues C5, C6, C10, C17, C21, C23, C26, C28, C31, C34, C38, C40, C46, C50, C54, C56, and C57 each coordinate a divalent metal cation. Residues 30–59 (PCQKCTSGCKCATKEECSKTCTKPCSCCPK) are alpha.

This sequence belongs to the metallothionein superfamily. Type 3 family.

Binds six divalent metal ions. Known to bind copper and cadmium. The protein is Metallothionein-1B of Callinectes sapidus (Blue crab).